The chain runs to 88 residues: Cytochrome c6 (88 aa).

Heme c contacts are provided by cysteine 15, cysteine 18, histidine 19, and methionine 61.

Belongs to the cytochrome c family. PetJ subfamily. As to quaternary structure, monomer. In terms of processing, binds 1 heme c group covalently per subunit.

It localises to the plastid. The protein localises to the chloroplast thylakoid lumen. Functions as an electron carrier between membrane-bound cytochrome b6-f and photosystem I in oxygenic photosynthesis. The polypeptide is Cytochrome c6 (petJ) (Bryopsis maxima (Green alga)).